The chain runs to 503 residues: Adenosine deaminase 2-A (503 aa).

The signal sequence occupies residues 1 to 24; sequence MHVLFLGDLMWIYLLLLCCASCNG. Zn(2+) is bound by residues His105 and His107. Substrate is bound at residue Asp108. Asn120 carries an N-linked (GlcNAc...) asparagine glycan. Cysteines 130 and 152 form a disulfide. 2 N-linked (GlcNAc...) asparagine glycosylation sites follow: Asn167 and Asn178. Substrate contacts are provided by residues 197 to 204 and His286; that span reads WERFEQVF. An N-linked (GlcNAc...) asparagine glycan is attached at Asn290. Position 319 (Gly319) interacts with substrate. Position 349 (His349) interacts with Zn(2+). The active-site Proton donor is the Glu352. Asn371 is a glycosylation site (N-linked (GlcNAc...) asparagine). His377 (proton acceptor) is an active-site residue. Asp434 is a binding site for Zn(2+). Asp435 serves as a coordination point for substrate.

This sequence belongs to the metallo-dependent hydrolases superfamily. Adenosine and AMP deaminases family. ADGF subfamily. Zn(2+) serves as cofactor.

It localises to the secreted. It catalyses the reaction adenosine + H2O + H(+) = inosine + NH4(+). Its function is as follows. Adenosine deaminase that may contribute to the degradation of extracellular adenosine, a signaling molecule that controls a variety of cellular responses. May play a role in the regulation of cell proliferation. The chain is Adenosine deaminase 2-A from Danio rerio (Zebrafish).